Consider the following 75-residue polypeptide: Small ribosomal subunit protein bS18 (75 aa).

It belongs to the bacterial ribosomal protein bS18 family. As to quaternary structure, part of the 30S ribosomal subunit. Forms a tight heterodimer with protein bS6.

Functionally, binds as a heterodimer with protein bS6 to the central domain of the 16S rRNA, where it helps stabilize the platform of the 30S subunit. This is Small ribosomal subunit protein bS18 from Mycoplasma mycoides subsp. mycoides SC (strain CCUG 32753 / NCTC 10114 / PG1).